The chain runs to 974 residues: Phosphoenolpyruvate carboxylase 1 (974 aa).

Catalysis depends on residues H164 and K604.

This sequence belongs to the PEPCase type 1 family. Exists as a homotetramer or heterooligomer. Mg(2+) is required as a cofactor.

Its subcellular location is the cytoplasm. It carries out the reaction oxaloacetate + phosphate = phosphoenolpyruvate + hydrogencarbonate. With respect to regulation, activated by glutamine and dihydroxyacetone phosphate. Inhibited by glutamate, aspartate, 2-oxoglutarate and malate. Through the carboxylation of phosphoenolpyruvate (PEP) it forms oxaloacetate, a four-carbon dicarboxylic acid source for the tricarboxylic acid cycle. In Chlamydomonas reinhardtii (Chlamydomonas smithii), this protein is Phosphoenolpyruvate carboxylase 1.